A 2353-amino-acid chain; its full sequence is C2 domain-containing protein 3 (2353 aa).

The segment at 1–27 (MKQRKGQGSGGSRGRKKRGLSDISPST) is disordered. A Phosphoserine modification is found at S466. Disordered stretches follow at residues 488–508 (KVLE…RNRN) and 549–568 (GVPP…AGPP). The span at 496–507 (KLKKRSAGKRNR) shows a compositional bias: basic residues. The C2 1 domain maps to 521-678 (DAQTMTLSVD…IQSELLSFSD (158 aa)). S728 carries the post-translational modification Phosphoserine. C2 domains follow at residues 787-919 (SHNL…SRLL), 985-1147 (QPTA…HRED), 1171-1339 (SSGL…TGWY), and 1403-1533 (EPAT…TLTV). The segment at 1569–1591 (HELDSMDCSSHSESEQLPRRNDE) is disordered. Residues 1617-1745 (TTAEVRLTQE…SGFQFVCGWY (129 aa)) enclose the C2 6 domain. The disordered stretch occupies residues 1822–1846 (SKELDFSSPGRSDTTRSQASRHEEH). The segment covering 1830–1839 (PGRSDTTRSQ) has biased composition (polar residues). The residue at position 1891 (S1891) is a Phosphoserine. Disordered regions lie at residues 1972 to 2032 (ALSS…NGGR), 2084 to 2118 (TSPW…PGPF), 2130 to 2269 (LSSP…QSLL), and 2301 to 2334 (PAAT…LNLP). The segment covering 2007-2016 (PLVRAPDKGT) has biased composition (basic and acidic residues). Residues 2084-2098 (TSPWSSVISDTSEVI) show a composition bias toward polar residues. Phosphoserine is present on residues S2114 and S2132. The span at 2181–2198 (SGAQQSSTFVGWSSPQTD) shows a compositional bias: polar residues. The segment covering 2236 to 2253 (SRRENHKGPPIDSSDIRQ) has biased composition (basic and acidic residues). The segment covering 2254-2267 (RQVTTGSETSTKQS) has biased composition (polar residues).

Interacts with IFT88, BBS4 and PCM1. Interacts with OFD1; OFD1 may act as a negative regulator of C2CD3. Associates with the BBSome complex.

Its subcellular location is the cytoplasm. It localises to the cytoskeleton. It is found in the cilium basal body. The protein resides in the microtubule organizing center. The protein localises to the centrosome. Its subcellular location is the centriole. In terms of biological role, component of the centrioles that acts as a positive regulator of centriole elongation. Promotes assembly of centriolar distal appendage, a structure at the distal end of the mother centriole that acts as an anchor of the cilium, and is required for recruitment of centriolar distal appendages proteins CEP83, SCLT1, CEP89, FBF1 and CEP164. Not required for centriolar satellite integrity or RAB8 activation. Required for primary cilium formation. Required for sonic hedgehog/SHH signaling and for proteolytic processing of GLI3. This Homo sapiens (Human) protein is C2 domain-containing protein 3 (C2CD3).